A 356-amino-acid polypeptide reads, in one-letter code: Mannonate dehydratase 2 (356 aa).

The protein belongs to the mannonate dehydratase family. Requires Fe(2+) as cofactor. Mn(2+) is required as a cofactor.

It carries out the reaction D-mannonate = 2-dehydro-3-deoxy-D-gluconate + H2O. Its pathway is carbohydrate metabolism; pentose and glucuronate interconversion. Functionally, catalyzes the dehydration of D-mannonate. The polypeptide is Mannonate dehydratase 2 (Bacillus licheniformis (strain ATCC 14580 / DSM 13 / JCM 2505 / CCUG 7422 / NBRC 12200 / NCIMB 9375 / NCTC 10341 / NRRL NRS-1264 / Gibson 46)).